Here is a 463-residue protein sequence, read N- to C-terminus: Argininosuccinate lyase (463 aa).

Belongs to the lyase 1 family. Argininosuccinate lyase subfamily.

It is found in the cytoplasm. It carries out the reaction 2-(N(omega)-L-arginino)succinate = fumarate + L-arginine. Its pathway is amino-acid biosynthesis; L-arginine biosynthesis; L-arginine from L-ornithine and carbamoyl phosphate: step 3/3. This is Argininosuccinate lyase from Thiobacillus denitrificans (strain ATCC 25259 / T1).